A 167-amino-acid polypeptide reads, in one-letter code: N-alpha-acetyltransferase (167 aa).

Residues 12–167 (YRIRNARLTD…EDAYLMAAPL (156 aa)) enclose the N-acetyltransferase domain. Residue Tyr-37 coordinates substrate. Position 88 (His-88) interacts with Zn(2+). Acetyl-CoA-binding positions include 92-94 (IAV) and 100-105 (RLGIGT). Glu-127 lines the Zn(2+) pocket. Acetyl-CoA contacts are provided by residues Asn-132 and 139-141 (YKK). Tyr-154 lines the substrate pocket.

It belongs to the acetyltransferase family. ARD1 subfamily. As to quaternary structure, homodimer.

It localises to the cytoplasm. It carries out the reaction N-terminal L-alanyl-[protein] + acetyl-CoA = N-terminal N(alpha)-acetyl-L-alanyl-[protein] + CoA + H(+). The catalysed reaction is N-terminal L-seryl-[protein] + acetyl-CoA = N-terminal N(alpha)-acetyl-L-seryl-[protein] + CoA + H(+). It catalyses the reaction N-terminal L-methionyl-L-leucyl-[protein] + acetyl-CoA = N-terminal N(alpha)-acetyl-L-methionyl-L-leucyl-[protein] + CoA + H(+). The enzyme catalyses N-terminal L-methionyl-L-glutamyl-[protein] + acetyl-CoA = N-terminal N(alpha)-acetyl-L-methionyl-L-glutamyl-[protein] + CoA + H(+). Functionally, displays alpha (N-terminal) acetyltransferase activity. Catalyzes the covalent attachment of an acetyl moiety from acetyl-CoA to the free alpha-amino group at the N-terminus of a protein. This chain is N-alpha-acetyltransferase, found in Sulfurisphaera tokodaii (strain DSM 16993 / JCM 10545 / NBRC 100140 / 7) (Sulfolobus tokodaii).